Consider the following 284-residue polypeptide: Ribosome-associated protein oga1 (284 aa).

Residues 1-284 form a disordered region; sequence MSVASKNLFD…LSETDFPALA (284 aa). A compositionally biased stretch (basic and acidic residues) spans 22 to 36; sequence TEKKTAASRDKKRSD. Phosphoserine is present on residues Ser37 and Ser51. Basic and acidic residues-rich tracts occupy residues 52–73 and 119–141; these read RKRD…ADQP and GREF…ERGW. Thr160 carries the post-translational modification Phosphothreonine. Position 162 is a phosphoserine (Ser162). Thr166 is modified (phosphothreonine). Composition is skewed to basic and acidic residues over residues 172-186 and 194-209; these read ENVK…ERKS and TVEK…KSAP. Low complexity predominate over residues 214-224; it reads ASLKKSASQKK. Residues 226 to 237 are compositionally biased toward basic and acidic residues; the sequence is AAKESKPKKVLL. Low complexity predominate over residues 245-254; sequence ARPARGGRPN. Over residues 263-277 the composition is skewed to polar residues; the sequence is ETASKTQQAPPTLSE.

Belongs to the STM1 family. Associates with mature 80S ribosomes. Binds to the head domain of the 40S ribosomal subunit and prevents mRNA binding by inserting its alpha-helix domain towards the mRNA entry tunnel at the decoding site, where it blocks the binding of tRNA and mRNA at the A- and P-sites. Interacts with eEF2; interaction sequesters eEF2 at the A-site of the ribosome, thereby blocking the interaction sites of the mRNA-tRNA complex, promoting ribosome stabilization and hibernation. Interacts with sad1. Phosphorylation by TORC1 upon nutrient replenishment inhibits STM1 and causes its release from dormant ribosomes.

Its subcellular location is the cytoplasm. In terms of biological role, ribosome preservation factor that protect a small pool of nontranslating, vacant ribosomes in cells under nutrient starvation conditions. Under nutrient-limiting conditions, cells reduce ribosome biogenesis and degrade ribosomes via autophagy (ribophagy) or proteasomal degradation. To avoid excessive degradation during starvation, STM1 binds to and protects 80S ribosomes from proteasomal degradation. Under nutrient-sufficient conditions, TORC1 phosphorylates and inhibits STM1 to prevent formation of dormant 80S ribosomes. Acts as an inhibitor of mRNA translation by promoting ribosome hibernation: clamps the two ribosomal subunits, thereby preventing their dissociation, and inhibits translation by excluding mRNA-binding. Acts via its association with eEF2, promoting ribosome stabilization and storage in an inactive state. May also repress translation by preventing association of eEF3 with ribosomes. Binds specifically G4 quadruplex (these are four-stranded right-handed helices, stabilized by guanine base quartets) and purine motif triplex (characterized by a third, antiparallel purine-rich DNA strand located within the major groove of a homopurine stretch of duplex DNA) nucleic acid structures. These structures may be present at telomeres or in rRNAs. Extends chronological lifespan when overexpressed. The polypeptide is Ribosome-associated protein oga1 (Schizosaccharomyces pombe (strain 972 / ATCC 24843) (Fission yeast)).